Here is a 412-residue protein sequence, read N- to C-terminus: Heme chaperone HemW (412 aa).

In terms of domain architecture, Radical SAM core spans 4–241; it reads GTYLMPTAAY…RHGQEVLTQA (238 aa). Residue Y13 coordinates S-adenosyl-L-methionine. [2Fe-2S] cluster is bound by residues C19, C23, and C26. S-adenosyl-L-methionine is bound by residues G72, 73 to 74, E105, Q132, R144, and D169; that span reads GT.

It belongs to the anaerobic coproporphyrinogen-III oxidase family. HemW subfamily. Requires [4Fe-4S] cluster as cofactor.

Its subcellular location is the cytoplasm. In terms of biological role, probably acts as a heme chaperone, transferring heme to an unknown acceptor. Binds one molecule of heme per monomer, possibly covalently. Binds 1 [2Fe-2S] cluster. Although this protein has sequence motifs typically found in proteins binding the [4Fe-4S]-AdoMet radical-SAM cluster and S-adenosylmethionine, spectroscopic evidence suggests that a [2Fe-2S] cluster is present; S-adenosylmethionine was not detected. Has no detectable coproporphyrinogen-III oxidase activity. In Synechocystis sp. (strain ATCC 27184 / PCC 6803 / Kazusa), this protein is Heme chaperone HemW.